We begin with the raw amino-acid sequence, 295 residues long: Tyrosine recombinase XerC (295 aa).

Positions 1-85 constitute a Core-binding (CB) domain; sequence MQNALQKYYD…ALRQFLAYLV (85 aa). The Tyr recombinase domain maps to 106 to 285; it reads YLPKNIDQEQ…DFKHLTDVYD (180 aa). Catalysis depends on residues arginine 145, lysine 169, histidine 237, arginine 240, and histidine 263. The O-(3'-phospho-DNA)-tyrosine intermediate role is filled by tyrosine 272.

The protein belongs to the 'phage' integrase family. XerC subfamily. As to quaternary structure, forms a cyclic heterotetrameric complex composed of two molecules of XerC and two molecules of XerD.

It is found in the cytoplasm. Functionally, site-specific tyrosine recombinase, which acts by catalyzing the cutting and rejoining of the recombining DNA molecules. The XerC-XerD complex is essential to convert dimers of the bacterial chromosome into monomers to permit their segregation at cell division. It also contributes to the segregational stability of plasmids. The chain is Tyrosine recombinase XerC from Actinobacillus succinogenes (strain ATCC 55618 / DSM 22257 / CCUG 43843 / 130Z).